The primary structure comprises 128 residues: UPF0292 protein MJ1624 (128 aa).

Residues 23–105 enclose the Toprim domain; sequence EKPIIVEGKR…KVNTKIRHEI (83 aa). 3 residues coordinate Mg(2+): Glu-29, Asp-74, and Asp-76.

The protein belongs to the UPF0292 family. Mg(2+) serves as cofactor.

This chain is UPF0292 protein MJ1624, found in Methanocaldococcus jannaschii (strain ATCC 43067 / DSM 2661 / JAL-1 / JCM 10045 / NBRC 100440) (Methanococcus jannaschii).